Reading from the N-terminus, the 202-residue chain is Peptidyl-tRNA hydrolase (202 aa).

Tyrosine 19 contributes to the tRNA binding site. The active-site Proton acceptor is the histidine 24. Positions 70, 72, and 118 each coordinate tRNA.

It belongs to the PTH family. As to quaternary structure, monomer.

The protein localises to the cytoplasm. It carries out the reaction an N-acyl-L-alpha-aminoacyl-tRNA + H2O = an N-acyl-L-amino acid + a tRNA + H(+). Hydrolyzes ribosome-free peptidyl-tRNAs (with 1 or more amino acids incorporated), which drop off the ribosome during protein synthesis, or as a result of ribosome stalling. Functionally, catalyzes the release of premature peptidyl moieties from peptidyl-tRNA molecules trapped in stalled 50S ribosomal subunits, and thus maintains levels of free tRNAs and 50S ribosomes. The polypeptide is Peptidyl-tRNA hydrolase (Prochlorococcus marinus (strain NATL2A)).